The primary structure comprises 51 residues: Large ribosomal subunit protein bL33 (51 aa).

It belongs to the bacterial ribosomal protein bL33 family.

In Pseudoalteromonas translucida (strain TAC 125), this protein is Large ribosomal subunit protein bL33.